The following is a 505-amino-acid chain: uncharacterized protein (505 aa).

The chain crosses the membrane as a helical span at residues 11–27 (IGIIGGGIVGWLAAIAL).

The protein localises to the membrane. This is an uncharacterized protein from Sinorhizobium fredii (strain NBRC 101917 / NGR234).